The primary structure comprises 313 residues: Non-structural protein 3 (313 aa).

Residues 1–149 (MLKMESTQQM…TRLMKDKLER (149 aa)) are RNA-binding. Residues 150-206 (GEVEVDDSFVEEKMEVDTIDWKSRYEQLEKRFESLKHRVNEKYNHWVLKARKVNENM) form a dimerization region. Residues 166–237 (DTIDWKSRYE…NKLERDLQSK (72 aa)) are a coiled coil. The interaction with host ZC3H7B stretch occupies residues 170–234 (WKSRYEQLEK…MYNNKLERDL (65 aa)). Positions 208–313 (SLQNVISQQQ…QQCNYTYTYE (106 aa)) are interaction with host EIF4G1.

It belongs to the rotavirus NSP3 family. In terms of assembly, homodimer. Interacts (via the coiled-coil region) with host ZC3H7B (via LD motif). Interacts with host EIF4G1.

The protein resides in the host cytoplasm. Functionally, plays an important role in stimulating the translation of viral mRNAs. These mRNAs are capped but not polyadenylated, instead terminating in a conserved sequence 'GACC' at the 3' that is recognized by NSP3, which competes with host PABPC1 for EIF4G1 binding. The interaction between NSP3 and host EIF4G1 stabilizes the EIF4E-EIF4G1 interaction, thereby facilitating the initiation of capped mRNA translation. The polypeptide is Non-structural protein 3 (Rotavirus A (strain RVA/Monkey/United States/RRV/1975/G3P5B[3]) (RV-A)).